Consider the following 397-residue polypeptide: Chorismate synthase (397 aa).

The NADP(+) site is built by Arg-40 and Arg-46. FMN contacts are provided by residues 129–131 (RSS), 257–258 (QA), Gly-302, 317–321 (KPISS), and Arg-343.

The protein belongs to the chorismate synthase family. As to quaternary structure, homotetramer. FMNH2 serves as cofactor.

It carries out the reaction 5-O-(1-carboxyvinyl)-3-phosphoshikimate = chorismate + phosphate. Its pathway is metabolic intermediate biosynthesis; chorismate biosynthesis; chorismate from D-erythrose 4-phosphate and phosphoenolpyruvate: step 7/7. Catalyzes the anti-1,4-elimination of the C-3 phosphate and the C-6 proR hydrogen from 5-enolpyruvylshikimate-3-phosphate (EPSP) to yield chorismate, which is the branch point compound that serves as the starting substrate for the three terminal pathways of aromatic amino acid biosynthesis. This reaction introduces a second double bond into the aromatic ring system. The protein is Chorismate synthase of Chlorobaculum tepidum (strain ATCC 49652 / DSM 12025 / NBRC 103806 / TLS) (Chlorobium tepidum).